The following is a 230-amino-acid chain: 2,3-bisphosphoglycerate-dependent phosphoglycerate mutase 2 (230 aa).

Substrate-binding positions include 8-15, 21-22, Arg-60, 87-90, Lys-98, 114-115, and 183-184; these read RHGQSEWN, TG, ERHY, RR, and GN. Residue His-9 is the Tele-phosphohistidine intermediate of the active site. Glu-87 serves as the catalytic Proton donor/acceptor.

The protein belongs to the phosphoglycerate mutase family. BPG-dependent PGAM subfamily.

The catalysed reaction is (2R)-2-phosphoglycerate = (2R)-3-phosphoglycerate. Its pathway is carbohydrate degradation; glycolysis; pyruvate from D-glyceraldehyde 3-phosphate: step 3/5. Functionally, catalyzes the interconversion of 2-phosphoglycerate and 3-phosphoglycerate. This chain is 2,3-bisphosphoglycerate-dependent phosphoglycerate mutase 2, found in Lactiplantibacillus plantarum (strain ATCC BAA-793 / NCIMB 8826 / WCFS1) (Lactobacillus plantarum).